The following is a 477-amino-acid chain: Glycogen synthase (477 aa).

Lysine 15 contacts ADP-alpha-D-glucose.

This sequence belongs to the glycosyltransferase 1 family. Bacterial/plant glycogen synthase subfamily.

The catalysed reaction is [(1-&gt;4)-alpha-D-glucosyl](n) + ADP-alpha-D-glucose = [(1-&gt;4)-alpha-D-glucosyl](n+1) + ADP + H(+). Its pathway is glycan biosynthesis; glycogen biosynthesis. Synthesizes alpha-1,4-glucan chains using ADP-glucose. In Serratia proteamaculans (strain 568), this protein is Glycogen synthase.